The chain runs to 604 residues: 3-hydroxy-3-methylglutaryl-coenzyme A reductase 2 (604 aa).

2 helical membrane passes run 47 to 67 (LPLY…MYFL) and 91 to 111 (AIVS…IGFV). The segment at 112 to 188 (QTFVARGNND…APLVTPAASE (77 aa)) is linker. N-linked (GlcNAc...) asparagine glycosylation occurs at Asn120. The tract at residues 189-604 (EDEEIIKSVV…STKDVTKASS (416 aa)) is catalytic. The active-site Charge relay system is Glu283. Asn347 carries an N-linked (GlcNAc...) asparagine glycan. The active-site Charge relay system is the Lys415. N-linked (GlcNAc...) asparagine glycosylation occurs at Asn460. Asp491 functions as the Charge relay system in the catalytic mechanism. Catalysis depends on His589, which acts as the Proton donor. N-linked (GlcNAc...) asparagine glycosylation is present at Asn593.

This sequence belongs to the HMG-CoA reductase family.

The protein localises to the endoplasmic reticulum membrane. The catalysed reaction is (R)-mevalonate + 2 NADP(+) + CoA = (3S)-3-hydroxy-3-methylglutaryl-CoA + 2 NADPH + 2 H(+). The protein operates within metabolic intermediate biosynthesis; (R)-mevalonate biosynthesis; (R)-mevalonate from acetyl-CoA: step 3/3. In terms of biological role, catalyzes the synthesis of mevalonate. The specific precursor of all isoprenoid compounds present in plants. The protein is 3-hydroxy-3-methylglutaryl-coenzyme A reductase 2 (HMGR2) of Capsicum annuum (Capsicum pepper).